A 209-amino-acid polypeptide reads, in one-letter code: Large ribosomal subunit protein uL3 (209 aa).

Residues Arg-141 to Gly-163 are disordered.

Belongs to the universal ribosomal protein uL3 family. Part of the 50S ribosomal subunit. Forms a cluster with proteins L14 and L19.

In terms of biological role, one of the primary rRNA binding proteins, it binds directly near the 3'-end of the 23S rRNA, where it nucleates assembly of the 50S subunit. The chain is Large ribosomal subunit protein uL3 from Clostridium botulinum (strain ATCC 19397 / Type A).